Consider the following 362-residue polypeptide: uncharacterized protein (362 aa).

3 disordered regions span residues 1–117 (MASK…GLNR), 153–172 (SSAP…GIRK), and 210–266 (RHFD…SSSN). Positions 12–23 (AKKEKEIKKEIE) are enriched in basic and acidic residues. Residues 51 to 70 (ENDDTDGDGKEEDAQKEDDI) are compositionally biased toward acidic residues. Low complexity-rich tracts occupy residues 100 to 112 (NSPP…TRNT), 153 to 167 (SSAP…GSPS), and 241 to 265 (VPPS…TSSS).

This is an uncharacterized protein from Caenorhabditis elegans.